The sequence spans 392 residues: Chaperone protein DnaJ (392 aa).

The 66-residue stretch at 2–67 (DYYDVLGVSK…QKRESYDRYG (66 aa)) folds into the J domain. A CR-type zinc finger spans residues 149–227 (GVEKELLVSG…CRGQGRIKDK (79 aa)). Zn(2+)-binding residues include cysteine 162, cysteine 165, cysteine 179, cysteine 182, cysteine 201, cysteine 204, cysteine 215, and cysteine 218. CXXCXGXG motif repeat units follow at residues 162 to 169 (CETCLGSG), 179 to 186 (CDRCKGSG), 201 to 208 (CPECGGEG), and 215 to 222 (CSNCRGQG).

It belongs to the DnaJ family. As to quaternary structure, homodimer. The cofactor is Zn(2+).

It is found in the cytoplasm. Its function is as follows. Participates actively in the response to hyperosmotic and heat shock by preventing the aggregation of stress-denatured proteins and by disaggregating proteins, also in an autonomous, DnaK-independent fashion. Unfolded proteins bind initially to DnaJ; upon interaction with the DnaJ-bound protein, DnaK hydrolyzes its bound ATP, resulting in the formation of a stable complex. GrpE releases ADP from DnaK; ATP binding to DnaK triggers the release of the substrate protein, thus completing the reaction cycle. Several rounds of ATP-dependent interactions between DnaJ, DnaK and GrpE are required for fully efficient folding. Also involved, together with DnaK and GrpE, in the DNA replication of plasmids through activation of initiation proteins. The polypeptide is Chaperone protein DnaJ (Chlamydia caviae (strain ATCC VR-813 / DSM 19441 / 03DC25 / GPIC) (Chlamydophila caviae)).